The chain runs to 596 residues: Nuclear receptor subfamily 2 group C member 2 (596 aa).

Residue S19 is modified to Phosphoserine; by MAPK. Position 46 is a phosphoserine (S46). Residues S55 and S68 each carry the phosphoserine; by MAPK modification. S98 carries the post-translational modification Phosphoserine. A DNA-binding region (nuclear receptor) is located at residues 114-189; that stretch reads VEYCVVCGDK…MGMKMESVQS (76 aa). NR C4-type zinc fingers lie at residues 117-137 and 153-177; these read CVVCGDKASGRHYGAVSCEGC and CRSNQDCIINKHHRNRCQFCRLKKC. K192 participates in a covalent cross-link: Glycyl lysine isopeptide (Lys-Gly) (interchain with G-Cter in SUMO2). The residue at position 219 (S219) is a Phosphoserine. At K231 the chain carries N6-acetyllysine. The 243-residue stretch at 341–583 folds into the NR LBD domain; the sequence is GSIHVISRDQ…SIIPYILKME (243 aa).

This sequence belongs to the nuclear hormone receptor family. NR2 subfamily. In terms of assembly, homodimer; can bind DNA as homodimer. Heterodimer; binds DNA as a heterodimer with NR2C1 required for chromatin remodeling and for binding to promoter regions such as globin DR1 repeats. Interacts with PCAF; the interaction preferentially occurs on the non-phosphorylated form and induces NR2C2-mediated transactivation activity and does not require the ligand-binding domain. Interacts (MAPK-mediated phosphorylated form) with NRIP1; the interaction promotes repression of NR2C2-mediated activity. Interacts with NR2C2AP; the interaction represses selective NR2C2-mediated transcriptional activity. Interacts with NLRP10. Interacts (via ligand-binding region) with transcriptional corepressor JAZF1; the interaction promotes NR2C2-mediated transcriptional repression. In terms of processing, phosphorylation on Ser-19 and Ser-68 is an important regulator of NR2C2-mediated transcriptional activity. Phosphorylation on these residues recruits the corepressor, NRIP1, leading to transcripional repression, whereas the non-phosphorylated form preferentially recruits the coactivator, PCAF.

The protein localises to the nucleus. Functionally, orphan nuclear receptor that can act as a repressor or activator of transcription. An important repressor of nuclear receptor signaling pathways such as retinoic acid receptor, retinoid X, vitamin D3 receptor, thyroid hormone receptor and estrogen receptor pathways. May regulate gene expression during the late phase of spermatogenesis. Together with NR2C1, forms the core of the DRED (direct repeat erythroid-definitive) complex that represses embryonic and fetal globin transcription including that of GATA1. Binds to hormone response elements (HREs) consisting of two 5'-AGGTCA-3' half site direct repeat consensus sequences. Plays a fundamental role in early embryonic development and embryonic stem cells. Required for normal spermatogenesis and cerebellum development. Appears to be important for neurodevelopmentally regulated behavior. Activates transcriptional activity of LHCG. Antagonist of PPARA-mediated transactivation. In Homo sapiens (Human), this protein is Nuclear receptor subfamily 2 group C member 2 (NR2C2).